The primary structure comprises 635 residues: Paraneoplastic antigen-like protein 8B (635 aa).

Disordered regions lie at residues 115 to 202 (PTQA…DESL), 260 to 332 (TDKS…NPEF), and 492 to 635 (AARE…PKCR). Residues 133-147 (SETQAQDSGEVTGQA) are compositionally biased toward polar residues. Residues 156–183 (NPRRGRRGRRNRTRRNRLTQKGKKRSRG) show a composition bias toward basic residues. The segment covering 261–273 (DKSKKEEAEKEPA) has biased composition (basic and acidic residues). Acidic residues-rich tracts occupy residues 302–329 (PDEEPVDSDTSESDSQESGDQETEELDN) and 502–524 (GSEEASDEQSEEESEDTESEASE). Over residues 531 to 540 (RKPRAKRART) the composition is skewed to basic residues. Residues 541-557 (APRGLTPAGAPPTASGA) are compositionally biased toward low complexity. 2 stretches are compositionally biased toward basic residues: residues 558–568 (RKTRAGGRGRG) and 619–635 (ARGKKARRGRRLPPKCR).

The protein belongs to the PNMA family.

The polypeptide is Paraneoplastic antigen-like protein 8B (Homo sapiens (Human)).